The chain runs to 164 residues: MSDKIGLFTGSFDPMTKGHVDLIERASRLFDKLYVGIFYNREKSGFFTIEARERIVKEALQHLDNVEVITSQNELAVTVARRLGAKAFVRGLRNSQDLDYEADMTFFNRELAGELETIFLLSKPAYQHISSSRIRELIAFQQDIADYVPQSVIKELERRTYEKN.

Position 11 (serine 11) interacts with substrate. ATP contacts are provided by residues 11 to 12 (SF) and histidine 19. Substrate-binding residues include lysine 43, alanine 76, and arginine 90. ATP-binding positions include 91–93 (GLR), glutamate 101, and 126–132 (YQHISSS).

This sequence belongs to the bacterial CoaD family. In terms of assembly, homohexamer. The cofactor is Mg(2+).

Its subcellular location is the cytoplasm. The catalysed reaction is (R)-4'-phosphopantetheine + ATP + H(+) = 3'-dephospho-CoA + diphosphate. It functions in the pathway cofactor biosynthesis; coenzyme A biosynthesis; CoA from (R)-pantothenate: step 4/5. Reversibly transfers an adenylyl group from ATP to 4'-phosphopantetheine, yielding dephospho-CoA (dPCoA) and pyrophosphate. The polypeptide is Phosphopantetheine adenylyltransferase (Streptococcus gordonii (strain Challis / ATCC 35105 / BCRC 15272 / CH1 / DL1 / V288)).